A 312-amino-acid chain; its full sequence is MTLWRPTPSDIWQGRDDRAEASNALRIFQTLRQSEHFIPANSGIALMGFASDEGVKRNHGRTGAAQAPDVLRKALANMASHHGHDRLVDMGTFTVEADQLEAAQHALSDGVQACQQAGMRTLVFGGGHETAWAHGRGVLEAFPDDRVVIINLDAHLDLRNAERATSGTPFRQLAQYCAARQREFQYACFGVSRAGNTQALWDEAGRLNVTLVEDLHFRRDALSTLDAVLAQADRVYLTLDLDVLPAGEMPAVSAPAALGIPALDLLPVIEQICRSGKLQAADLVEFNPLYDREGQGARLAARLAWQIAHWWA.

Residues histidine 128, aspartate 153, histidine 155, aspartate 157, aspartate 240, and aspartate 242 each contribute to the Mn(2+) site.

This sequence belongs to the arginase family. It depends on Mn(2+) as a cofactor.

The enzyme catalyses N-formimidoyl-L-glutamate + H2O = formamide + L-glutamate. Its pathway is amino-acid degradation; L-histidine degradation into L-glutamate; L-glutamate from N-formimidoyl-L-glutamate (hydrolase route): step 1/1. Catalyzes the conversion of N-formimidoyl-L-glutamate to L-glutamate and formamide. The protein is Formimidoylglutamase of Enterobacter sp. (strain 638).